Here is a 426-residue protein sequence, read N- to C-terminus: Glutamate-1-semialdehyde 2,1-aminomutase (426 aa).

K265 carries the post-translational modification N6-(pyridoxal phosphate)lysine.

Belongs to the class-III pyridoxal-phosphate-dependent aminotransferase family. HemL subfamily. Homodimer. It depends on pyridoxal 5'-phosphate as a cofactor.

The protein resides in the cytoplasm. It carries out the reaction (S)-4-amino-5-oxopentanoate = 5-aminolevulinate. The protein operates within porphyrin-containing compound metabolism; protoporphyrin-IX biosynthesis; 5-aminolevulinate from L-glutamyl-tRNA(Glu): step 2/2. This Akkermansia muciniphila (strain ATCC BAA-835 / DSM 22959 / JCM 33894 / BCRC 81048 / CCUG 64013 / CIP 107961 / Muc) protein is Glutamate-1-semialdehyde 2,1-aminomutase.